Reading from the N-terminus, the 584-residue chain is 2-succinyl-5-enolpyruvyl-6-hydroxy-3-cyclohexene-1-carboxylate synthase (584 aa).

Belongs to the TPP enzyme family. MenD subfamily. In terms of assembly, homodimer. It depends on Mg(2+) as a cofactor. Requires Mn(2+) as cofactor. The cofactor is thiamine diphosphate.

It catalyses the reaction isochorismate + 2-oxoglutarate + H(+) = 5-enolpyruvoyl-6-hydroxy-2-succinyl-cyclohex-3-ene-1-carboxylate + CO2. Its pathway is quinol/quinone metabolism; 1,4-dihydroxy-2-naphthoate biosynthesis; 1,4-dihydroxy-2-naphthoate from chorismate: step 2/7. It participates in quinol/quinone metabolism; menaquinone biosynthesis. Functionally, catalyzes the thiamine diphosphate-dependent decarboxylation of 2-oxoglutarate and the subsequent addition of the resulting succinic semialdehyde-thiamine pyrophosphate anion to isochorismate to yield 2-succinyl-5-enolpyruvyl-6-hydroxy-3-cyclohexene-1-carboxylate (SEPHCHC). This Bacillus thuringiensis (strain Al Hakam) protein is 2-succinyl-5-enolpyruvyl-6-hydroxy-3-cyclohexene-1-carboxylate synthase.